A 645-amino-acid chain; its full sequence is Beta-galactosidase (645 aa).

Arginine 102 contributes to the substrate binding site. Cysteine 106 is a binding site for Zn(2+). Residue asparagine 140 participates in substrate binding. Glutamate 141 serves as the catalytic Proton donor. Residues cysteine 150, cysteine 152, and cysteine 155 each coordinate Zn(2+). Glutamate 312 (nucleophile) is an active-site residue. Residues tryptophan 320 and 360–363 each bind substrate; that span reads EQMH.

It belongs to the glycosyl hydrolase 42 family. In terms of assembly, homotrimer.

The enzyme catalyses Hydrolysis of terminal non-reducing beta-D-galactose residues in beta-D-galactosides.. With respect to regulation, inhibited by Cu(2+) and Fe(2+), and moderately activated by divalent cations such as Co(2+), Mn(2+) and Zn(2+). Considerably activated by dithiothreitol, beta-mercaptoethanol and cysteine. In Thermus thermophilus, this protein is Beta-galactosidase.